A 318-amino-acid chain; its full sequence is Myoblast determination protein 1 (318 aa).

Residue methionine 1 forms a Peptide (Met-Gly) (interchain with G-Cter in ubiquitin) linkage. Lysine 104 bears the N6-methyllysine; by EHMT2 mark. Positions 109–160 (DRRKAATMRERRRLSKVNEAFETLKRCTSSNPNQRLPKVEILRNAIRYIEGL) constitute a bHLH domain. Disordered stretches follow at residues 174-224 (AAAA…RRRN) and 266-318 (APAL…YQVL). Polar residues predominate over residues 197 to 207 (SDASSPRSNCS). Over residues 266-276 (APALLLADAPP) the composition is skewed to low complexity.

As to quaternary structure, efficient DNA binding requires dimerization with another bHLH protein. Seems to form active heterodimers with ITF-2. Interacts with SUV39H1. Interacts with DDX5. Interacts with CHD2. Interacts with TSC22D3. Interacts with SETD3. Interacts with P-TEFB complex; promotes the transcriptional activity of MYOD1 through its CDK9-mediated phosphorylation. Interacts with CSRP3. Interacts with NUPR1. Phosphorylated by CDK9. This phosphorylation promotes its function in muscle differentiation. Post-translationally, acetylated by a complex containing EP300 and PCAF. The acetylation is essential to activate target genes. Conversely, its deacetylation by SIRT1 inhibits its function. In terms of processing, ubiquitinated on the N-terminus; which is required for proteasomal degradation. Methylation at Lys-104 by EHMT2/G9a inhibits myogenic activity.

The protein localises to the nucleus. Its function is as follows. Acts as a transcriptional activator that promotes transcription of muscle-specific target genes and plays a role in muscle differentiation. Together with MYF5 and MYOG, co-occupies muscle-specific gene promoter core region during myogenesis. Induces fibroblasts to differentiate into myoblasts. Interacts with and is inhibited by the twist protein. This interaction probably involves the basic domains of both proteins. The protein is Myoblast determination protein 1 (MYOD1) of Bos taurus (Bovine).